Reading from the N-terminus, the 389-residue chain is Chalcone synthase 6 (389 aa).

Cys-164 is a catalytic residue.

It belongs to the thiolase-like superfamily. Chalcone/stilbene synthases family.

It catalyses the reaction (E)-4-coumaroyl-CoA + 3 malonyl-CoA + 3 H(+) = 2',4,4',6'-tetrahydroxychalcone + 3 CO2 + 4 CoA. Its pathway is secondary metabolite biosynthesis; flavonoid biosynthesis. In terms of biological role, the primary product of this enzyme is 4,2',4',6'-tetrahydroxychalcone (also termed naringenin-chalcone or chalcone) which can under specific conditions spontaneously isomerize into naringenin. The protein is Chalcone synthase 6 (CHS6) of Pisum sativum (Garden pea).